We begin with the raw amino-acid sequence, 361 residues long: 3-dehydroquinate synthase (361 aa).

The protein belongs to the archaeal-type DHQ synthase family.

The enzyme catalyses 2-amino-2,3,7-trideoxy-D-lyxo-hept-6-ulosonate + NAD(+) + H2O = 3-dehydroquinate + NH4(+) + NADH + H(+). Functionally, catalyzes the oxidative deamination and cyclization of 2-amino-3,7-dideoxy-D-threo-hept-6-ulosonic acid (ADH) to yield 3-dehydroquinate (DHQ), which is fed into the canonical shikimic pathway of aromatic amino acid biosynthesis. This chain is 3-dehydroquinate synthase, found in Methanococcus maripaludis (strain C6 / ATCC BAA-1332).